The following is a 142-amino-acid chain: Hemoglobin A subunit alpha-1 (142 aa).

Positions 2-142 (VLTAGDKANV…VATALTSKYR (141 aa)) constitute a Globin domain. H59 provides a ligand contact to O2. H88 is a binding site for heme b.

The protein belongs to the globin family. In terms of assembly, tetramer of alpha-1, alpha-2 and two identical beta chains. Red blood cells.

Involved in oxygen transport from the lung to the various peripheral tissues. This chain is Hemoglobin A subunit alpha-1, found in Aldabrachelys gigantea (Aldabra giant tortoise).